A 506-amino-acid polypeptide reads, in one-letter code: Nondiscriminating glutamyl-tRNA synthetase EARS2, mitochondrial (506 aa).

A mitochondrion-targeting transit peptide spans 1-41; sequence MAALLRRLLQRGRPLAASGRRVGRREARLGTGPGVAVRVRF. 40-42 contacts L-glutamate; that stretch reads RFA. Positions 45-53 match the 'HIGH' region motif; sequence PTGFLHLGG. Residue H50 participates in ATP binding. L-glutamate-binding positions include E76, 228-232, and R246; that span reads YHLAC. E249 lines the ATP pocket. N6-succinyllysine is present on K256. Residue 284–288 participates in ATP binding; sequence KLSKR. The 'KMSKS' region motif lies at 284 to 288; sequence KLSKR. K486 carries the N6-acetyllysine modification.

Belongs to the class-I aminoacyl-tRNA synthetase family. Glutamate--tRNA ligase type 1 subfamily.

It is found in the mitochondrion matrix. It catalyses the reaction tRNA(Glx) + L-glutamate + ATP = L-glutamyl-tRNA(Glx) + AMP + diphosphate. The catalysed reaction is tRNA(Glu) + L-glutamate + ATP = L-glutamyl-tRNA(Glu) + AMP + diphosphate. The enzyme catalyses tRNA(Gln) + L-glutamate + ATP = L-glutamyl-tRNA(Gln) + AMP + diphosphate. Functionally, non-discriminating glutamyl-tRNA synthetase that catalyzes aminoacylation of both mitochondrial tRNA(Glu) and tRNA(Gln) and participates in RNA aminoacylation for mitochondrial protein translation. Attachs glutamate to tRNA(Glu) or tRNA(Gln) in a two-step reaction: glutamate is first activated by ATP to form Glu-AMP and then transferred to the acceptor end of tRNA(Glu) or tRNA(Gln). In vitro, cytoplasmic tRNA(Gln) is slightly glutamylated, but with low activity. This is Nondiscriminating glutamyl-tRNA synthetase EARS2, mitochondrial from Macaca fascicularis (Crab-eating macaque).